We begin with the raw amino-acid sequence, 196 residues long: uncharacterized protein (196 aa).

The protein belongs to the flavoredoxin family. FMN serves as cofactor.

This is an uncharacterized protein from Aquifex aeolicus (strain VF5).